We begin with the raw amino-acid sequence, 720 residues long: Collectin-12 (720 aa).

Over 1–37 (MKDDFNDEEEVQSFGYKRFGIQEGNECTKCKNDWALR) the chain is Cytoplasmic. A helical; Signal-anchor for type II membrane protein membrane pass occupies residues 38-58 (VAIALLYVLCALLTIAVAVLG). At 59–720 (YKVVQRMDNV…RTNESKVPVL (662 aa)) the chain is on the extracellular side. Coiled coils occupy residues 95 to 120 (EKSE…QLSD), 216 to 267 (ISSL…LAAN), and 377 to 408 (LHGL…LDKE). Positions 433–576 (FTILQGPPGP…GPPGLPGLPA (144 aa)) are disordered. Collagen-like domains follow at residues 444 to 503 (GPRG…PGPK) and 510 to 569 (GRQG…PGPP). Over residues 460 to 479 (PKGEKGEKGAPGDAGPKGEK) the composition is skewed to basic and acidic residues. A compositionally biased stretch (low complexity) spans 488-503 (PGLKGPPGSRGSPGPK). Residues 504 to 513 (GSRGSGGRQG) are compositionally biased toward gly residues. Positions 527–560 (PGRDGQPGPTGPQGPQGLRGPAGPAGLEGARGPV) are enriched in low complexity. A compositionally biased stretch (pro residues) spans 562-576 (PIGPPGPPGLPGLPA). Intrachain disulfides connect cysteine 604-cysteine 615, cysteine 634-cysteine 709, and cysteine 687-cysteine 701. Residues 611–710 (FREQCYHFSA…CTERIGFICE (100 aa)) enclose the C-type lectin domain. Residues isoleucine 643, asparagine 645, and glutamate 649 each coordinate Ca(2+). The a carbohydrate site is built by lysine 670, glutamine 673, and aspartate 675. Residues glutamine 673, aspartate 675, asparagine 676, glutamate 685, aspartate 686, asparagine 697, aspartate 698, and glutamate 710 each contribute to the Ca(2+) site. Glutamate 685 is a binding site for a carbohydrate. A carbohydrate-binding residues include asparagine 697 and aspartate 698.

The protein resides in the membrane. Its function is as follows. Scavenger receptor that displays several functions associated with host defense. Binds to carbohydrates. This is Collectin-12 (colec12) from Danio rerio (Zebrafish).